The following is a 228-amino-acid chain: Sugar fermentation stimulation protein homolog (228 aa).

It belongs to the SfsA family.

The polypeptide is Sugar fermentation stimulation protein homolog (Desulfitobacterium hafniense (strain DSM 10664 / DCB-2)).